Reading from the N-terminus, the 301-residue chain is Pantothenate synthetase (301 aa).

ATP is bound at residue 30–37; it reads MGNLHEGH. His-37 functions as the Proton donor in the catalytic mechanism. (R)-pantoate is bound at residue Gln-61. Gln-61 serves as a coordination point for beta-alanine. ATP is bound at residue 149–152; that stretch reads GEKD. Gln-155 lines the (R)-pantoate pocket. Residues Val-178 and 186 to 189 contribute to the ATP site; that span reads MSSR.

It belongs to the pantothenate synthetase family. Homodimer.

The protein resides in the cytoplasm. It carries out the reaction (R)-pantoate + beta-alanine + ATP = (R)-pantothenate + AMP + diphosphate + H(+). It participates in cofactor biosynthesis; (R)-pantothenate biosynthesis; (R)-pantothenate from (R)-pantoate and beta-alanine: step 1/1. Functionally, catalyzes the condensation of pantoate with beta-alanine in an ATP-dependent reaction via a pantoyl-adenylate intermediate. This is Pantothenate synthetase from Vibrio vulnificus (strain CMCP6).